Consider the following 217-residue polypeptide: uncharacterized protein (217 aa).

Helical transmembrane passes span 4–23 (IYGI…GKET), 44–66 (NVVI…LTWV), 76–98 (TVET…SIII), 111–128 (FLYL…IHAI), 132–154 (MAMV…PLAL), 166–188 (AGTA…IVLF), and 198–215 (LLLS…ALQL).

Its subcellular location is the cell membrane. This is an uncharacterized protein from Archaeoglobus fulgidus (strain ATCC 49558 / DSM 4304 / JCM 9628 / NBRC 100126 / VC-16).